The chain runs to 290 residues: MFQGSMPALVTPMTNGAVDFEVLKRLVDWHVEEGSNGLVPVGTTGESPTLTHEEHEQVIETVVKAAGGRVPVIAGAGSNNTAEAMRHVQHAKDVGADATLVVTPYYNKPTQRGLIAHYEALAEVGIPIFIYNIPGRSVVDMTPETMGELAKHPMIIGVKDATADMARVSRQRETCGTDFVQMSAEDASALGFNAHGGVGCISVTANVAPKLCAEFQAAMGAGDYTEALAYQDRLMPLHNAIFTEPGLCGVKYAMSVLGLCSDEVRLPLVGVDESTKAAIEAALRHAGLLS.

Pyruvate is bound at residue Thr44. The Proton donor/acceptor role is filled by Tyr131. Catalysis depends on Lys159, which acts as the Schiff-base intermediate with substrate. A pyruvate-binding site is contributed by Ile201.

This sequence belongs to the DapA family. As to quaternary structure, homotetramer; dimer of dimers.

The protein localises to the cytoplasm. It catalyses the reaction L-aspartate 4-semialdehyde + pyruvate = (2S,4S)-4-hydroxy-2,3,4,5-tetrahydrodipicolinate + H2O + H(+). It functions in the pathway amino-acid biosynthesis; L-lysine biosynthesis via DAP pathway; (S)-tetrahydrodipicolinate from L-aspartate: step 3/4. In terms of biological role, catalyzes the condensation of (S)-aspartate-beta-semialdehyde [(S)-ASA] and pyruvate to 4-hydroxy-tetrahydrodipicolinate (HTPA). The chain is 4-hydroxy-tetrahydrodipicolinate synthase from Jannaschia sp. (strain CCS1).